A 315-amino-acid polypeptide reads, in one-letter code: UDP-N-acetylenolpyruvoylglucosamine reductase (315 aa).

Residues 27–207 (RVGGPADVLY…TKRMNAITAR (181 aa)) form the FAD-binding PCMH-type domain. The active site involves Arg-172. Positions 214-236 (IREKTSGSTFANPDPPGTPNQRK) are disordered. The Proton donor role is filled by Ser-221. Glu-297 is an active-site residue.

The protein belongs to the MurB family. It depends on FAD as a cofactor.

It is found in the cytoplasm. It catalyses the reaction UDP-N-acetyl-alpha-D-muramate + NADP(+) = UDP-N-acetyl-3-O-(1-carboxyvinyl)-alpha-D-glucosamine + NADPH + H(+). The protein operates within cell wall biogenesis; peptidoglycan biosynthesis. Functionally, cell wall formation. The polypeptide is UDP-N-acetylenolpyruvoylglucosamine reductase (Maricaulis maris (strain MCS10) (Caulobacter maris)).